Reading from the N-terminus, the 561-residue chain is Excitatory amino acid transporter 4 (561 aa).

At 1–52 (MSSHGNSLFLRESGAGGGCLQGLQDSLQQRALRTRLRLQTMTREHVRRFLRR) the chain is on the cytoplasmic side. S2 carries the phosphoserine modification. A run of 3 helical transmembrane segments spans residues 53-73 (NAFILLTVSAVIIGVSLAFAL), 96-116 (MLQMLVLPLIVSSRVTGMASL), and 130-150 (VYYMVTTVIAVFIGILMVTII). 3 N-linked (GlcNAc...) asparagine glycosylation sites follow: N213, N229, and N236. 3 helical membrane-spanning segments follow: residues 259 to 282 (SANGINALGLVVFSVAFGLVIGGM), 292 to 319 (FFDSLNEAIMRLVGIIIWYAPVGILFLI), and 341 to 362 (LTVIVGLFLHAGGVLPLIYFLV). Positions 368–398 (FPFIGGILQALITAMGTSSSSATLPITFRCL) form an intramembrane region, discontinuously helical. L-aspartate is bound at residue 385–387 (SSS). A helical membrane pass occupies residues 408-434 (ITRFVLPVGATVNMDGTALYEALAAIF). Na(+) is bound by residues G416, T418, and N420. L-aspartate contacts are provided by residues T424, 465-469 (IPQAG), D498, and N505. The discontinuously helical intramembrane region spans 448 to 481 (ITTISITATAASVGAAGIPQAGLVTMVIVLTSVG). The helical transmembrane segment at 495-516 (WFLDRLRTMTNVLGDSIGAAVI) threads the bilayer. N505 and D509 together coordinate Na(+).

This sequence belongs to the dicarboxylate/amino acid:cation symporter (DAACS) (TC 2.A.23) family. SLC1A6 subfamily. As to quaternary structure, homotrimer.

The protein resides in the cell membrane. The catalysed reaction is K(+)(in) + L-glutamate(out) + 3 Na(+)(out) + H(+)(out) = K(+)(out) + L-glutamate(in) + 3 Na(+)(in) + H(+)(in). The enzyme catalyses K(+)(in) + L-aspartate(out) + 3 Na(+)(out) + H(+)(out) = K(+)(out) + L-aspartate(in) + 3 Na(+)(in) + H(+)(in). It catalyses the reaction D-aspartate(out) + K(+)(in) + 3 Na(+)(out) + H(+)(out) = D-aspartate(in) + K(+)(out) + 3 Na(+)(in) + H(+)(in). In terms of biological role, sodium-dependent, high-affinity amino acid transporter that mediates the uptake of L-glutamate and also L-aspartate and D-aspartate. Functions as a symporter that transports one amino acid molecule together with two or three Na(+) ions and one proton, in parallel with the counter-transport of one K(+) ion. Mediates Cl(-) flux that is not coupled to amino acid transport; this avoids the accumulation of negative charges due to aspartate and Na(+) symport. Plays a redundant role in the rapid removal of released glutamate from the synaptic cleft, which is essential for terminating the postsynaptic action of glutamate. The polypeptide is Excitatory amino acid transporter 4 (Slc1a6) (Rattus norvegicus (Rat)).